The primary structure comprises 561 residues: MSQVSLPSQLKETGPRLQSRCRSSARSERIFGGYNTSDIYSMAFDEMFDVQGNVRGPYKGIYAELAPSDASELKARAEALARAFIDQGITFSLSGQERPFPLDLVPRVISASEWSRLERGITQRVKALEMYLDDIYGDQEILRDGVIPRRLITSCEHFHRQAVGIIPPNGVRIHVAGIDLIRDDSGNFRVLEDNLRSPSGVSYVMENRRTIARVFPNLFATHRVRAVDDYASHLLRALRNSAATNEADPTVVVLTPGVANAAYFEHSLLARQMGVELVEGRDLFCRDNQVYMCTTEGERQVDVIYRRIDDAFLDPLQFRADSVLGVAGLVNAARAGNVVISSAIGNGVGDDKLVYTYVPTMMEYYLREKPLLANVDTLRCWLDDERQEVLDRIHDLVLKPVEGSGGYGIVFGPDASEKELAAASKKIRDDPRSWIAQPVMELSTVPTQVGSTLAPRYVDLRPFAVNDGNDVWVLPGGLTRVALVEGSRVVNSSQGGGSKDTWVLAPHASYGARELGAAEIVCSLPQSSPDPVPDGSPRPKQQPQQAQAEQAQQPQQQIMLP.

Positions methionine 1–lysine 11 are enriched in polar residues. 2 disordered regions span residues methionine 1–arginine 22 and cysteine 522–proline 561. Positions glutamine 541 to proline 561 are enriched in low complexity.

The protein to Synechocystis PCC 6803 sll0335 and to M.tuberculosis Rv2567.

This is an uncharacterized protein from Mycobacterium leprae (strain TN).